The primary structure comprises 305 residues: Mitochondrial distribution and morphology protein 12 (305 aa).

The region spanning Met-1–Thr-236 is the SMP-LTD domain. The segment at Leu-233 to Glu-305 is disordered. The segment covering Phe-235–Arg-248 has biased composition (acidic residues). Residues Asn-258–Thr-269 are compositionally biased toward basic and acidic residues. Residues Glu-279–Glu-305 show a composition bias toward polar residues.

This sequence belongs to the MDM12 family. Component of the ER-mitochondria encounter structure (ERMES) or MDM complex, composed of MMM1, MDM10, MDM12 and MDM34. An MMM1 homodimer associates with one molecule of MDM12 on each side in a pairwise head-to-tail manner, and the SMP-LTD domains of MMM1 and MDM12 generate a continuous hydrophobic tunnel for phospholipid trafficking.

The protein localises to the mitochondrion outer membrane. It localises to the endoplasmic reticulum membrane. Its function is as follows. Component of the ERMES/MDM complex, which serves as a molecular tether to connect the endoplasmic reticulum (ER) and mitochondria. Components of this complex are involved in the control of mitochondrial shape and protein biogenesis, and function in nonvesicular lipid trafficking between the ER and mitochondria. MDM12 is required for the interaction of the ER-resident membrane protein MMM1 and the outer mitochondrial membrane-resident beta-barrel protein MDM10. The MDM12-MMM1 subcomplex functions in the major beta-barrel assembly pathway that is responsible for biogenesis of all mitochondrial outer membrane beta-barrel proteins, and acts in a late step after the SAM complex. The MDM10-MDM12-MMM1 subcomplex further acts in the TOM40-specific pathway after the action of the MDM12-MMM1 complex. Essential for establishing and maintaining the structure of mitochondria and maintenance of mtDNA nucleoids. The protein is Mitochondrial distribution and morphology protein 12 of Kluyveromyces lactis (strain ATCC 8585 / CBS 2359 / DSM 70799 / NBRC 1267 / NRRL Y-1140 / WM37) (Yeast).